A 126-amino-acid chain; its full sequence is Ribonuclease VapC23 (126 aa).

Residues I2–H118 enclose the PINc domain. 2 residues coordinate Mg(2+): D5 and D98.

The protein belongs to the PINc/VapC protein family. Mg(2+) serves as cofactor.

Functionally, toxic component of a type II toxin-antitoxin (TA) system. An RNase. The cognate antitoxin is VapB23. This Mycobacterium tuberculosis (strain CDC 1551 / Oshkosh) protein is Ribonuclease VapC23.